Here is a 483-residue protein sequence, read N- to C-terminus: MKHYVAVDIGASSGRLILGKLVDEKLQLEEIHRFKNGFTYRDGHERWEIDQLMQEIFIGLEKVKQLGISECVLGIDTWGVDYVLIGASGEKLADPISYRDKRTLNAVQNLTSEYPREYIYKKTGIQFMELNTLYQLYVEERDLLERAEKILLIPDYIGYVLTGVKVAETTNSSTTQMLNLREQLFDKDLLSHLNIDVEKFAPLTDAGTYLGKVKEEWLEKYDIPNCDVVTVATHDTASAVVGTPAEGENWAFLSSGTWSLIGMELSAPINNEAAFKENYTNEWGAYGTYRFLKNIMGLWIVQEIARMDDYKHSFAEMAEEASNYPYFKQIINVNDARFNNPENMVDEIKLYCQETGQTIPETIGELTNCVYGSLALYYALELEKMTEITGKKIEKLYIVGGGSNVAMLNQLTAKLAGIEVFAGPSEATAIGNLVVQMINQGEIESMRAGRKIIRNSFEIGEFSCGDVRFEEIKERFTKVLEFN.

An ATP-binding site is contributed by 11–15 (ASSGR). Substrate-binding positions include G79 and 234-236 (HDT). The Proton acceptor role is filled by D235. T257 provides a ligand contact to ATP. Position 294 (N294) interacts with substrate. Q302 is a binding site for ATP. Cysteines 352 and 369 form a disulfide. G401 contributes to the ATP binding site.

It belongs to the rhamnulokinase family. Mg(2+) serves as cofactor.

The catalysed reaction is L-rhamnulose + ATP = L-rhamnulose 1-phosphate + ADP + H(+). It participates in carbohydrate degradation; L-rhamnose degradation; glycerone phosphate from L-rhamnose: step 2/3. Functionally, involved in the catabolism of L-rhamnose (6-deoxy-L-mannose). Catalyzes the transfer of the gamma-phosphate group from ATP to the 1-hydroxyl group of L-rhamnulose to yield L-rhamnulose 1-phosphate. In Listeria monocytogenes serotype 4b (strain F2365), this protein is Rhamnulokinase.